The chain runs to 313 residues: Methylenetetrahydrofolate dehydrogenase [NAD(+)] (313 aa).

Cys152 is an active-site residue. Residues 187 to 188 (RS), 210 to 211 (DI), and 270 to 272 (FAG) contribute to the NAD(+) site.

The protein belongs to the tetrahydrofolate dehydrogenase/cyclohydrolase family. As to quaternary structure, homodimer.

The catalysed reaction is (6R)-5,10-methylene-5,6,7,8-tetrahydrofolate + NAD(+) = (6R)-5,10-methenyltetrahydrofolate + NADH. Its pathway is one-carbon metabolism; tetrahydrofolate interconversion. Functionally, catalyzes oxidation of cytoplasmic one-carbon units for purine biosynthesis. The polypeptide is Methylenetetrahydrofolate dehydrogenase [NAD(+)] (thfA) (Dictyostelium discoideum (Social amoeba)).